Here is a 975-residue protein sequence, read N- to C-terminus: MEELCKQPPPPPPLPPPPSSPSVAIEDPLPNGKGGGAVVVPSIAKLPEEELLGSVTMHNCPGTRASARVIQKMKQDQTRPMTPPPSEREPNKKEEKAAQKTPSQLKTGSGKTTWTNVERNCFFDALNEFGKDFEAVANCINAKLKRRNANSDYSFKTKDQVRQHYYQTYHKICKYVRFSEELKKPAQELYTLINYGEMRRKLQFLTEKHFMKLKQLVYQGQITVRCKGKNIRIKTPSCKALRRLNQLDDSLEDIRLPSKVEVLVTPANMEAFGRVQSLAQNPRGRIIVPLHKKLISFIKTFEYKWRSANQRLHEEKSAIFPSSLPSTATNNNNNNNETEPMQPSVASLDPSMCFQPRPGVAIHRPLLSITAYLSSISICLTAYEERMGFKVRSETLGNLAGMPVAASKRLRTESGSEKRSPETKKPKPSASPPLEKTLDDGPLEGNLMKMENSSGDELAEEIHEFLGDILEAMPHPQAVTIPALSTTTGDTTTVAVALETSHDPVLQAYPASADLSHAMVTSVIQTTCAAAPAPSTLVSGSLTAPSVARSKRKEAKEAAAAAQARNFKPLLSDDILKRIRKGWTQANAADITIGDLYVVFGQDSKLELEYYWCEVDSSTAMASSILTINTVAPSSSSVATQTGTSASNAIQTSASSNCYVSATSTSSTSLPYNPNDCDSVERVRAVTTSSVSNKLKHLLLVANLSERVRKRQCNCGHTCDRKRDLMTKAQQLAEATATGVVDGNFRTPMLPVRRPISNIDPVRQLSALTRQKINRQVLVQRRLLPPTSVGDRPYDLLSVRQLHSGLFEPIDRVDGTSSGGISSSGSKPDSSMGATAASQDQEPGDQRALDFLNDEATQASNRDMPNLDICVATSRTDVSGSLNEAVQDESTNQSFFHGSMSPMHLLRDSTSNARWLEDNINDFSLTSLLGHLDEIDATRDILDPSSSMSIISESSVDFRHKFQEIAALLQQQEKD.

Disordered stretches follow at residues 1 to 37 (MEELCKQPPPPPPLPPPPSSPSVAIEDPLPNGKGGGA), 71 to 111 (QKMK…GSGK), 318 to 346 (AIFPSSLPSTATNNNNNNNETEPMQPSVA), 403 to 450 (PVAA…LMKM), and 809 to 844 (PIDRVDGTSSGGISSSGSKPDSSMGATAASQDQEPG). Over residues 7 to 20 (QPPPPPPLPPPPSS) the composition is skewed to pro residues. The segment covering 86–98 (SEREPNKKEEKAA) has biased composition (basic and acidic residues). The segment covering 100 to 111 (KTPSQLKTGSGK) has biased composition (polar residues). An SANT domain is found at 109–173 (SGKTTWTNVE…HYYQTYHKIC (65 aa)). Over residues 410–425 (LRTESGSEKRSPETKK) the composition is skewed to basic and acidic residues. Positions 815-833 (GTSSGGISSSGSKPDSSMG) are enriched in low complexity.

The protein belongs to the cramped family.

Its subcellular location is the nucleus. In terms of biological role, polycomb group (Pc-G) genes are needed to maintain expression patterns of the homeotic selector genes of the Antennapedia (Antp-C) and Bithorax (Bx-C) complexes, and hence for the maintenance of segmental determination. Can act as a modifier of position effect variegation (PEV). The polypeptide is Protein cramped (crm) (Drosophila sechellia (Fruit fly)).